The following is a 330-amino-acid chain: Glycerol-3-phosphate dehydrogenase [NAD(P)+] (330 aa).

The NADPH site is built by tryptophan 13, arginine 33, and lysine 103. Residues lysine 103, glycine 131, and threonine 133 each contribute to the sn-glycerol 3-phosphate site. Position 135 (alanine 135) interacts with NADPH. Lysine 186, aspartate 239, serine 249, arginine 250, and asparagine 251 together coordinate sn-glycerol 3-phosphate. Residue lysine 186 is the Proton acceptor of the active site. Arginine 250 serves as a coordination point for NADPH. Positions 274 and 276 each coordinate NADPH.

This sequence belongs to the NAD-dependent glycerol-3-phosphate dehydrogenase family.

It is found in the cytoplasm. It catalyses the reaction sn-glycerol 3-phosphate + NAD(+) = dihydroxyacetone phosphate + NADH + H(+). It carries out the reaction sn-glycerol 3-phosphate + NADP(+) = dihydroxyacetone phosphate + NADPH + H(+). The protein operates within membrane lipid metabolism; glycerophospholipid metabolism. Catalyzes the reduction of the glycolytic intermediate dihydroxyacetone phosphate (DHAP) to sn-glycerol 3-phosphate (G3P), the key precursor for phospholipid synthesis. This chain is Glycerol-3-phosphate dehydrogenase [NAD(P)+], found in Erythrobacter litoralis (strain HTCC2594).